A 310-amino-acid polypeptide reads, in one-letter code: Uracil phosphoribosyltransferase homolog (310 aa).

2 disordered regions span residues 1-27 (MASE…PSPE) and 62-89 (SERD…GNYD). The segment covering 16 to 25 (RQVNSTSSPS) has biased composition (polar residues). Position 25 is a phosphoserine (Ser25). GTP is bound by residues Arg134, Arg143, and 177–180 (EKGN). Arg187 contacts 5-phospho-alpha-D-ribose 1-diphosphate. Positions 204 and 233 each coordinate GTP. 239-247 (YPILSTGNT) serves as a coordination point for 5-phospho-alpha-D-ribose 1-diphosphate. Residue 300 to 302 (THF) participates in uracil binding.

Belongs to the UPRTase family.

It is found in the cytoplasm. The protein localises to the nucleus. The sequence is that of Uracil phosphoribosyltransferase homolog (Uprt) from Mus musculus (Mouse).